A 257-amino-acid chain; its full sequence is Zinc transporter ZupT (257 aa).

The next 8 helical transmembrane spans lie at 5–25 (LILT…GVLG), 32–52 (LLAF…LMEM), 61–81 (GMSP…YFGL), 109–129 (AILL…ATFV), 137–157 (LGFG…LAVA), 171–191 (ILWA…AWLI), 195–215 (MISP…MVAL), and 236–256 (GVLC…TAGI). Residues Asn-120 and Glu-123 each coordinate Fe(2+). Zn(2+) is bound by residues Glu-123 and His-148. 3 residues coordinate Fe(2+): Asn-149, Glu-152, and Glu-181. Position 152 (Glu-152) interacts with Zn(2+).

The protein belongs to the ZIP transporter (TC 2.A.5) family. ZupT subfamily.

The protein localises to the cell inner membrane. It carries out the reaction Zn(2+)(in) = Zn(2+)(out). Functionally, mediates zinc uptake. May also transport other divalent cations. The protein is Zinc transporter ZupT of Shigella flexneri serotype 5b (strain 8401).